The following is a 412-amino-acid chain: Tryptophan 2,3-dioxygenase (412 aa).

Residues 79–83 (FIVVH), Tyr-146, and Arg-150 contribute to the substrate site. Heme is bound at residue His-346. Thr-360 is a substrate binding site.

This sequence belongs to the tryptophan 2,3-dioxygenase family. Homotetramer. It depends on heme as a cofactor.

It carries out the reaction L-tryptophan + O2 = N-formyl-L-kynurenine. It participates in amino-acid degradation; L-tryptophan degradation via kynurenine pathway; L-kynurenine from L-tryptophan: step 1/2. Functionally, heme-dependent dioxygenase that catalyzes the oxidative cleavage of the L-tryptophan (L-Trp) pyrrole ring and converts L-tryptophan to N-formyl-L-kynurenine. Catalyzes the oxidative cleavage of the indole moiety. This Sorangium cellulosum (strain So ce56) (Polyangium cellulosum (strain So ce56)) protein is Tryptophan 2,3-dioxygenase.